We begin with the raw amino-acid sequence, 180 residues long: NADH-quinone oxidoreductase subunit I (180 aa).

4Fe-4S ferredoxin-type domains follow at residues 50–80 (LTRNIDGGERCVACNLCAVVCPVDCISLQKS) and 90–119 (KFFRINFSRCIFCGLCEEACPTAAIQLMPD). [4Fe-4S] cluster contacts are provided by Cys-60, Cys-63, Cys-66, Cys-70, Cys-99, Cys-102, Cys-105, and Cys-109.

It belongs to the complex I 23 kDa subunit family. NDH-1 is composed of 13 different subunits. Subunits NuoA, H, J, K, L, M, N constitute the membrane sector of the complex. The cofactor is [4Fe-4S] cluster.

It is found in the cell membrane. It carries out the reaction a quinone + NADH + 5 H(+)(in) = a quinol + NAD(+) + 4 H(+)(out). In terms of biological role, NDH-1 shuttles electrons from NADH, via FMN and iron-sulfur (Fe-S) centers, to quinones in the respiratory chain. The immediate electron acceptor for the enzyme in this species is believed to be ubiquinone. Couples the redox reaction to proton translocation (for every two electrons transferred, four hydrogen ions are translocated across the cytoplasmic membrane), and thus conserves the redox energy in a proton gradient. In Buchnera aphidicola subsp. Schizaphis graminum (strain Sg), this protein is NADH-quinone oxidoreductase subunit I.